Consider the following 410-residue polypeptide: Serine/threonine transporter SstT (410 aa).

9 consecutive transmembrane segments (helical) span residues 11-31, 45-65, 79-99, 138-158, 179-199, 214-234, 285-305, 327-347, and 353-373; these read VSLVKRIIIGIIIGITLAVTV, FVGALKAVAPVLVFFLVISAI, ILILYGFSTFLASLTAVVASF, ALLNANYIGILTWAVLLGIAL, IVTWVINFAPIGIMGLVFDAI, LAVLLGTMCFVAFVMNPLIVF, ISIPLGATINMAGAAVTISVL, VLSAIAAAGASGVAGGSLLLI, and LFGIPNDIAMQVVGVGFIIGV.

This sequence belongs to the dicarboxylate/amino acid:cation symporter (DAACS) (TC 2.A.23) family.

The protein localises to the cell membrane. It carries out the reaction L-serine(in) + Na(+)(in) = L-serine(out) + Na(+)(out). It catalyses the reaction L-threonine(in) + Na(+)(in) = L-threonine(out) + Na(+)(out). Its function is as follows. Involved in the import of serine and threonine into the cell, with the concomitant import of sodium (symport system). The polypeptide is Serine/threonine transporter SstT (Geobacillus thermodenitrificans (strain NG80-2)).